The chain runs to 37 residues: Large ribosomal subunit protein bL36 (37 aa).

This sequence belongs to the bacterial ribosomal protein bL36 family.

The chain is Large ribosomal subunit protein bL36 from Staphylococcus saprophyticus subsp. saprophyticus (strain ATCC 15305 / DSM 20229 / NCIMB 8711 / NCTC 7292 / S-41).